We begin with the raw amino-acid sequence, 273 residues long: Probable membrane transporter protein YunE (273 aa).

Transmembrane regions (helical) follow at residues 3–23 (FVIL…IGLG), 50–70 (AIGT…LAYI), 81–101 (LIFF…SKLF), 105–125 (SFSV…MLKA), 157–177 (VGIA…IGGG), 185–205 (MLLF…IIFL), 222–242 (WLYA…GAAI), and 251–271 (IVMI…YEGI).

It belongs to the 4-toluene sulfonate uptake permease (TSUP) (TC 2.A.102) family.

Its subcellular location is the cell membrane. The sequence is that of Probable membrane transporter protein YunE (yunE) from Bacillus subtilis (strain 168).